The chain runs to 215 residues: MEKNPPDDTGPVHVPLGHIVANEKWRGSQLAQEMQGKIKLIFEDGLTPDFYLSNRCCILYVTEADLVAGNGYRKRLVRVRNSNNLKGIVVVEKTRMSEQYFPALQKFTVLDLGMVLLPVASQMEASCLVIQLVQEQTKEPSKNPLLGKKRALLLSEPSLLRTVQQIPGVGKVKAPLLLQKFPSIQQLSNASIGELEQVVGQAVAQQIHAFFTQPR.

The tract at residues 160 to 215 is ruvA domain 2-like; the sequence is LRTVQQIPGVGKVKAPLLLQKFPSIQQLSNASIGELEQVVGQAVAQQIHAFFTQPR.

Belongs to the multisubunit FA complex composed of FANCA, FANCB, FANCC, FANCE, FANCF, FANCG, FANCL/PHF9, FANCM and FAAP24. Interacts with FANCM.

The protein localises to the nucleus. Plays a role in DNA repair through recruitment of the FA core complex to damaged DNA. Regulates FANCD2 monoubiquitination upon DNA damage. Induces chromosomal instability as well as hypersensitivity to DNA cross-linking agents, when repressed. Targets FANCM/FAAP24 complex to the DNA, preferentially to single strand DNA. The chain is Fanconi anemia core complex-associated protein 24 from Homo sapiens (Human).